The chain runs to 439 residues: MHKEETFNQCALTINGYKSEVKKTYELPGDKSVGHRSLLIGALPKGEYKIRNFPQSRDCLTTLKIMEELGVKVKVLKDYILVNSPGYENFKKKIDYIDCGNSGTTSRLIAGILAGVGVETNLVGDKSLSIRPMKRIVDPLNSMGANIEMEKDHMPLIFKGNGELKGIDYTMEIASAQVKSCILLAGFLSEGVTKVRELSPTRDHTERMLKYIEGNIKIENKEIEIENSTIKSKDIYVPGDISSAAYIIACAILGEDCEIILENVLLNENRRKYLDLLKKMGANLKYLEKNQCNGEHVGNILVKSSFLKGISIGKEITPYIIDEIPIISLIASFAEGKTIFENVEELKYKESDRIKAIMVNLKSLGVKTELVENNLIIYGGLSKINKEINIRTFNDHRIALTFLCSAMRNSEKTYIDNWDCVAISFPNSLNYFKDFFRIN.

3-phosphoshikimate-binding residues include Lys-31, Ser-32, and Arg-36. Phosphoenolpyruvate is bound at residue Lys-31. Gly-103 and Arg-131 together coordinate phosphoenolpyruvate. 3-phosphoshikimate contacts are provided by Ser-175, Gln-177, Asp-322, and Lys-349. Gln-177 provides a ligand contact to phosphoenolpyruvate. Asp-322 (proton acceptor) is an active-site residue. Residues Arg-353 and Arg-397 each contribute to the phosphoenolpyruvate site.

It belongs to the EPSP synthase family. As to quaternary structure, monomer.

Its subcellular location is the cytoplasm. The enzyme catalyses 3-phosphoshikimate + phosphoenolpyruvate = 5-O-(1-carboxyvinyl)-3-phosphoshikimate + phosphate. The protein operates within metabolic intermediate biosynthesis; chorismate biosynthesis; chorismate from D-erythrose 4-phosphate and phosphoenolpyruvate: step 6/7. Its function is as follows. Catalyzes the transfer of the enolpyruvyl moiety of phosphoenolpyruvate (PEP) to the 5-hydroxyl of shikimate-3-phosphate (S3P) to produce enolpyruvyl shikimate-3-phosphate and inorganic phosphate. This Clostridium tetani (strain Massachusetts / E88) protein is 3-phosphoshikimate 1-carboxyvinyltransferase.